A 387-amino-acid polypeptide reads, in one-letter code: Patatin-05 (387 aa).

An N-terminal signal peptide occupies residues 1 to 23 (MATTKSVLVLIFMILATTSSTFA). The region spanning 32–230 (LSIDGGGIKG…TVADPALLSV (199 aa)) is the PNPLA domain. The short motif at 36-41 (GGGIKG) is the GXGXXG element. The GXSXG signature appears at 75–79 (GTSTG). The active-site Nucleophile is the S77. 2 N-linked (GlcNAc...) asparagine glycosylation sites follow: N115 and N203. Residue D216 is the Proton acceptor of the active site. Residues 216 to 218 (DGA) carry the DGA/G motif.

It belongs to the patatin family. As to expression, tuber.

The protein resides in the vacuole. Probable lipolytic acyl hydrolase (LAH), an activity which is thought to be involved in the response of tubers to pathogens. This is Patatin-05 (pat1-k1) from Solanum tuberosum (Potato).